Here is a 29-residue protein sequence, read N- to C-terminus: Glucagon (29 aa).

The residue at position 2 (Ser-2) is a Phosphoserine.

This sequence belongs to the glucagon family.

The protein resides in the secreted. In terms of biological role, glucagon plays a key role in glucose metabolism and homeostasis. Regulates blood glucose by increasing gluconeogenesis and decreasing glycolysis. This is Glucagon (GCG) from Chinchilla chinchilla (Short-tailed chinchilla).